The primary structure comprises 127 residues: Large ribosomal subunit protein bL12 (127 aa).

Belongs to the bacterial ribosomal protein bL12 family. Homodimer. Part of the ribosomal stalk of the 50S ribosomal subunit. Forms a multimeric L10(L12)X complex, where L10 forms an elongated spine to which 2 to 4 L12 dimers bind in a sequential fashion. Binds GTP-bound translation factors.

Its function is as follows. Forms part of the ribosomal stalk which helps the ribosome interact with GTP-bound translation factors. Is thus essential for accurate translation. The chain is Large ribosomal subunit protein bL12 from Desulforapulum autotrophicum (strain ATCC 43914 / DSM 3382 / VKM B-1955 / HRM2) (Desulfobacterium autotrophicum).